The following is a 723-amino-acid chain: Nuclear hormone receptor HR96 (723 aa).

A DNA-binding region (nuclear receptor) is located at residues 4 to 79 (PKNCAVCGDK…IGMKSENIMS (76 aa)). 2 NR C4-type zinc fingers span residues 7–27 (CAVCGDKALGYNFNAVTCESC) and 43–67 (CPFNQNCDITVVTRRFCQKCRLRKC). Residues 95–163 (AKRRLMENGT…QASSPGTQVN (69 aa)) form a disordered region. Composition is skewed to polar residues over residues 122–142 (DSSSSNLDHYSGSQDSQSCGS) and 151–163 (SGRQASSPGTQVN). In terms of domain architecture, NR LBD spans 483 to 723 (EQMKLRELRL…LREIFDLKNH (241 aa)).

This sequence belongs to the nuclear hormone receptor family. NR1 subfamily.

It is found in the nucleus. Functionally, binds selectively to the HSP27 20E response element. This is Nuclear hormone receptor HR96 (Hr96) from Drosophila melanogaster (Fruit fly).